Consider the following 81-residue polypeptide: Exodeoxyribonuclease 7 small subunit (81 aa).

Positions 61–81 (MNDSDQEVAFETPQGGTGDAD) are disordered.

The protein belongs to the XseB family. As to quaternary structure, heterooligomer composed of large and small subunits.

It is found in the cytoplasm. It carries out the reaction Exonucleolytic cleavage in either 5'- to 3'- or 3'- to 5'-direction to yield nucleoside 5'-phosphates.. Its function is as follows. Bidirectionally degrades single-stranded DNA into large acid-insoluble oligonucleotides, which are then degraded further into small acid-soluble oligonucleotides. The protein is Exodeoxyribonuclease 7 small subunit of Levilactobacillus brevis (strain ATCC 367 / BCRC 12310 / CIP 105137 / JCM 1170 / LMG 11437 / NCIMB 947 / NCTC 947) (Lactobacillus brevis).